The primary structure comprises 274 residues: Bis(5'-nucleosyl)-tetraphosphatase, symmetrical (274 aa).

This sequence belongs to the Ap4A hydrolase family.

It catalyses the reaction P(1),P(4)-bis(5'-adenosyl) tetraphosphate + H2O = 2 ADP + 2 H(+). Hydrolyzes diadenosine 5',5'''-P1,P4-tetraphosphate to yield ADP. This is Bis(5'-nucleosyl)-tetraphosphatase, symmetrical from Shewanella loihica (strain ATCC BAA-1088 / PV-4).